The following is a 490-amino-acid chain: Betaine aldehyde dehydrogenase (490 aa).

2 residues coordinate K(+): Ile27 and Asp93. 150–152 serves as a coordination point for NAD(+); the sequence is GAW. The active-site Charge relay system is the Lys162. Residue 176–179 coordinates NAD(+); it reads KPSE. Val180 is a binding site for K(+). 230–233 provides a ligand contact to NAD(+); the sequence is GTDT. Leu246 serves as a coordination point for K(+). Residue Glu252 is the Proton acceptor of the active site. 3 residues coordinate NAD(+): Gly254, Cys286, and Glu387. The active-site Nucleophile is Cys286. Cys286 carries the cysteine sulfenic acid (-SOH) modification. Lys457 and Gly460 together coordinate K(+). Glu464 acts as the Charge relay system in catalysis.

The protein belongs to the aldehyde dehydrogenase family. As to quaternary structure, dimer of dimers. K(+) serves as cofactor.

The enzyme catalyses betaine aldehyde + NAD(+) + H2O = glycine betaine + NADH + 2 H(+). Its pathway is amine and polyamine biosynthesis; betaine biosynthesis via choline pathway; betaine from betaine aldehyde: step 1/1. Its function is as follows. Involved in the biosynthesis of the osmoprotectant glycine betaine. Catalyzes the irreversible oxidation of betaine aldehyde to the corresponding acid. The protein is Betaine aldehyde dehydrogenase of Pseudomonas fluorescens (strain Pf0-1).